Consider the following 766-residue polypeptide: Serine/threonine-protein kinase PLK4 (766 aa).

One can recognise a Protein kinase domain in the interval 14–267 (YEVQHLLGKG…LEAVLCHPFM (254 aa)). ATP is bound by residues 20–28 (LGKGGFAIV) and lysine 43. Aspartate 138 functions as the Proton acceptor in the catalytic mechanism. Residues 379–496 (EDRISVPPLN…ARFVGLVKSK (118 aa)) enclose the Cryptic POLO box 1 (CPB1) domain. The region spanning 497 to 600 (TPKVTYFSTL…GRRPVTDVQP (104 aa)) is the Cryptic POLO box 2 (CPB2) domain. In terms of domain architecture, POLO box spans 658–737 (PIKRINVPDV…IPNIQIKLKT (80 aa)).

The protein belongs to the protein kinase superfamily. Ser/Thr protein kinase family. CDC5/Polo subfamily. As to quaternary structure, homodimer. Ubiquitinated by the SCF(Slimb) ubiquitin ligase complex; leading to its degradation by the proteasome during interphase and regulating centriole number and ensuring the block to centriole reduplication.

The protein resides in the cytoplasm. It is found in the cytoskeleton. The protein localises to the microtubule organizing center. Its subcellular location is the centrosome. It localises to the centriole. The enzyme catalyses L-seryl-[protein] + ATP = O-phospho-L-seryl-[protein] + ADP + H(+). It carries out the reaction L-threonyl-[protein] + ATP = O-phospho-L-threonyl-[protein] + ADP + H(+). Its function is as follows. Serine/threonine-protein kinase that plays a central role in centriole duplication. Able to trigger procentriole formation on the surface of the mother centriole cylinder, using mother centriole as a platform, leading to the recruitment of centriole biogenesis proteins such as sas-6. When overexpressed, it is able to induce centrosome amplification through the simultaneous generation of multiple procentrioles adjoining each parental centriole during S phase. Centrosome amplification following overexpression can initiate tumorigenesis, highlighting the importance of centrosome regulation in cancers. The polypeptide is Serine/threonine-protein kinase PLK4 (SAK) (Drosophila yakuba (Fruit fly)).